Consider the following 296-residue polypeptide: Phosphatidylglycerol--prolipoprotein diacylglyceryl transferase (296 aa).

The next 4 membrane-spanning stretches (helical) occupy residues 10 to 30 (IAFSLGPVQVHWYGLMYLAAF), 57 to 77 (LLFYGMLGVVLGGRIGYMLFY), 92 to 112 (VWEGGMSFHGGLLGVLIACWL), and 119 to 139 (LHFFDVMDFVAPLVPLGLGFG). Arg140 is a binding site for a 1,2-diacyl-sn-glycero-3-phospho-(1'-sn-glycerol). The next 3 helical transmembrane spans lie at 194-214 (QLYEAALEGVVMFVVLWTFSM), 220-240 (YAVSGLFALLYGVFRFIVEFV), and 254-274 (WLTMGQILSLPLVAVGLVLLA).

The protein belongs to the Lgt family.

It localises to the cell inner membrane. The enzyme catalyses L-cysteinyl-[prolipoprotein] + a 1,2-diacyl-sn-glycero-3-phospho-(1'-sn-glycerol) = an S-1,2-diacyl-sn-glyceryl-L-cysteinyl-[prolipoprotein] + sn-glycerol 1-phosphate + H(+). It participates in protein modification; lipoprotein biosynthesis (diacylglyceryl transfer). Catalyzes the transfer of the diacylglyceryl group from phosphatidylglycerol to the sulfhydryl group of the N-terminal cysteine of a prolipoprotein, the first step in the formation of mature lipoproteins. This Xanthomonas axonopodis pv. citri (strain 306) protein is Phosphatidylglycerol--prolipoprotein diacylglyceryl transferase.